We begin with the raw amino-acid sequence, 459 residues long: UDP-glycosyltransferase 78D3 (459 aa).

Residues 338 to 340 (APQ), 355 to 363 (HGGWNSVLE), and 377 to 380 (FGDH) each bind UDP-alpha-D-glucose.

Belongs to the UDP-glycosyltransferase family.

Functionally, possesses low quercetin 3-O-glucosyltransferase activity in vitro. The polypeptide is UDP-glycosyltransferase 78D3 (UGT78D3) (Arabidopsis thaliana (Mouse-ear cress)).